Consider the following 428-residue polypeptide: G2/mitotic-specific cyclin-1 (428 aa).

Residues 1-22 are disordered; that stretch reads MKFSEEKNVSNNPTNFEGGLDS.

Belongs to the cyclin family. Cyclin AB subfamily. In terms of assembly, interacts with the CDC2 protein kinase to form a serine/threonine kinase holoenzyme complex also known as maturation promoting factor (MPF). The cyclin subunit imparts substrate specificity to the complex.

Functionally, essential for the control of the cell cycle at the G2/M (mitosis) transition. This Medicago sativa subsp. varia (Alfalfa) protein is G2/mitotic-specific cyclin-1.